A 330-amino-acid chain; its full sequence is Small ribosomal subunit protein mS35 (330 aa).

A disordered region spans residues 50 to 73; it reads AAGKGVRGQMKPRRQAGEPRTERM. Residues 64 to 73 are compositionally biased toward basic and acidic residues; that stretch reads QAGEPRTERM.

The protein belongs to the mitochondrion-specific ribosomal protein mS35 family. As to quaternary structure, component of the mitochondrial ribosome small subunit (28S) which comprises a 12S rRNA and about 30 distinct proteins.

The protein resides in the mitochondrion. The polypeptide is Small ribosomal subunit protein mS35 (mrps35) (Danio rerio (Zebrafish)).